Reading from the N-terminus, the 601-residue chain is N-acetyltransferase ESCO2 (601 aa).

Serine 29, serine 75, serine 223, and serine 244 each carry phosphoserine. A disordered region spans residues 222-243 (SSLENEPSLGRTQKSKSEVIED). The segment covering 282–305 (KEKLIKDSSDDRVSSKEHKVDKNE) has biased composition (basic and acidic residues). Residues 282-315 (KEKLIKDSSDDRVSSKEHKVDKNEAFSSEDSLGE) are disordered. Residues 306–315 (AFSSEDSLGE) are compositionally biased toward polar residues. A Phosphoserine modification is found at serine 312. The CCHH-type zinc-finger motif lies at 387–411 (TVCKSCGMIYTASNPEDEMQHVQHH). Serine 512 is modified (phosphoserine).

The protein belongs to the acetyltransferase family. ECO subfamily. In terms of tissue distribution, widely expressed in fetal tissues. In adult, it is expressed in thymus, placenta and small intestine.

The protein resides in the nucleus. Its subcellular location is the chromosome. The enzyme catalyses L-lysyl-[protein] + acetyl-CoA = N(6)-acetyl-L-lysyl-[protein] + CoA + H(+). Acetyltransferase required for the establishment of sister chromatid cohesion. Couples the processes of cohesion and DNA replication to ensure that only sister chromatids become paired together. In contrast to the structural cohesins, the deposition and establishment factors are required only during the S phase. Acetylates the cohesin component SMC3. This chain is N-acetyltransferase ESCO2, found in Homo sapiens (Human).